A 309-amino-acid polypeptide reads, in one-letter code: Ribosomal RNA large subunit methyltransferase F (309 aa).

The tract at residues 1-21 (MASQHDKKSVQSGLLHPRNPH) is disordered.

It belongs to the methyltransferase superfamily. METTL16/RlmF family.

The protein resides in the cytoplasm. It carries out the reaction adenosine(1618) in 23S rRNA + S-adenosyl-L-methionine = N(6)-methyladenosine(1618) in 23S rRNA + S-adenosyl-L-homocysteine + H(+). Specifically methylates the adenine in position 1618 of 23S rRNA. This Desulfotalea psychrophila (strain LSv54 / DSM 12343) protein is Ribosomal RNA large subunit methyltransferase F.